We begin with the raw amino-acid sequence, 369 residues long: Chanoclavine-I aldehyde reductase fgaOx3 (369 aa).

Residues 23-25 (PMT), alanine 58, glutamine 100, and histidine 169 each bind FMN. Substrate contacts are provided by histidine 169 and asparagine 172. The active-site Proton donor is the tyrosine 174. FMN contacts are provided by residues glycine 292, 316-317 (GR), and arginine 317. Residue tyrosine 344 participates in substrate binding.

The protein belongs to the NADH:flavin oxidoreductase/NADH oxidase family. Monomer. FMN is required as a cofactor.

The enzyme catalyses dihydrochanoclavine-I aldehyde + NADP(+) = chanoclavine-I aldehyde + NADPH + H(+). It participates in alkaloid biosynthesis; ergot alkaloid biosynthesis. Functionally, chanoclavine-I aldehyde reductase; part of the gene cluster that mediates the biosynthesis of isofumigaclavines, fungal ergot alkaloids. The tryptophan dimethylallyltransferase ifgA catalyzes the first step of ergot alkaloid biosynthesis by condensing dimethylallyl diphosphate (DMAP) and tryptophan to form 4-dimethylallyl-L-tryptophan. The second step is catalyzed by the methyltransferase ifgB that methylates 4-dimethylallyl-L-tryptophan in the presence of S-adenosyl-L-methionine, resulting in the formation of N-methyl-dimethylallyl-L-tryptophan. The catalase ifgD and the FAD-dependent oxidoreductase ifgC then transform N-methyl-dimethylallyl-L-tryptophan to chanoclavine-I which is further oxidized by ifgE in the presence of NAD(+), resulting in the formation of chanoclavine-I aldehyde. The chanoclavine-I aldehyde reductases ifgG and/or fgaOx3 reduce chanoclavine-I aldehyde to dihydrochanoclavine-I aldehyde that spontaneously dehydrates to form 6,8-dimethyl-6,7-didehydroergoline. The festuclavine dehydrogenases ifgF1 and/or ifgF2 then catalyze the reduction of 6,8-dimethyl-6,7-didehydroergoline to form festuclavine. Hydrolysis of festuclavine by a yet undetermined cytochrome P450 monooxygenase (called ifgH) then leads to the formation of isofumigaclavine B which is in turn acetylated by ifgI to isofumigaclavine A. Penicillium roqueforti has interestingly at least two sets of genes for the consumption of chanoclavine-I aldehyde on three different loci, the OYEs ifgG/fgaOx3 and the festuclavine synthase homologs ifgF1/ifgF2. The reason for the duplication of these genes is unclear, probably to ensure the conversion of chanoclavine-I aldehyde by differential gene expression under various environmental conditions. In Penicillium roqueforti (strain FM164), this protein is Chanoclavine-I aldehyde reductase fgaOx3.